The sequence spans 176 residues: Replication restart protein PriC (176 aa).

This sequence belongs to the PriC family. Component of the replication restart primosome, which is composed of PriA, PriB, PriC, DnaB and DnaT; DnaG primase associates transiently with this complex. Interacts with the C-terminus of SSB; this interaction is required to load the main replicative helicase onto substrate replication forks. Interacts with helicase DnaB alone and in the DnaB-DnaC complex, probably 1:1 binding with DnaB. Interacts with DnaT.

In terms of biological role, involved in the restart of stalled replication forks, which reloads the DnaB replicative helicase on sites other than the origin of replication. Recognizes abandoned replication forks and remodels DNA single-stranded binding protein (SSB) on ssDNA to uncover a loading site for DnaB. There are several restart pathways, the PriA-PriC pathway is a minor restart pathway. Part of the minor PriC-Rep pathway for restart of stalled replication forks, which has a different substrate specificity than PriA. Part of the major restart pathway with PriA, PriB, DnaB, DnaT and DnaG primase. priB and priC have redundant roles in the cell. Binds 7-9 nucleotides of single-stranded (ss)DNA. This is Replication restart protein PriC from Klebsiella pneumoniae subsp. pneumoniae (strain ATCC 700721 / MGH 78578).